The following is a 130-amino-acid chain: Serum amyloid A-4 protein (130 aa).

Positions 1 to 18 are cleaved as a signal peptide; it reads MRLFTGIVFCSLVMGVTS. Asparagine 94 carries N-linked (GlcNAc...) asparagine; partial glycosylation. The interval 101 to 130 is disordered; the sequence is DSKSNEKAEEWGRSGKDPDRFRPDGLPKKY.

It belongs to the SAA family. As to quaternary structure, apolipoprotein of the HDL complex. As to expression, expressed by the liver; secreted in plasma.

The protein localises to the secreted. Its function is as follows. Major acute phase reactant. This chain is Serum amyloid A-4 protein, found in Homo sapiens (Human).